An 824-amino-acid chain; its full sequence is MVPSRRTWNLGATPSLRGLWRVGRVQEPKPGMARPAPASPAARPFPHTGQGRLRTGRGKDILPSGEEDSTSRTAARPSLAQCRALSVDWPGPRSPHRLYLTVQVENLKEKLISQAQEVSRLRSELGGTDAEKHRDRLMVENEQLRQELRRCEVELQELRAQPVVPCEGCEHSQESSQLRDKLSQLQLEVAENKGMLSELNLEVQQKTDRLAEVELRLKDCLAEKAQEEERLSRRLRDSHETIASLRAQSPPVKYVIKTVEVESSKTKQALSESQTRNQHLQEQVAMQRQVLKEMEQQLQNSHQLTVQLRAQIAMYEAELERAHGQMLEEMQSLEEDKNRAIEEAFARAQVEMKAVHENLAGVRTNLLTLQPALRTLTNDYNGLKRQVRGFPLLLQEALRSVKAEIGQAIEEVNSNNQELLRKYRRELQLRKKCHNELVRLKGNIRVIARVRPVTKEDGEGPEATNAVTFDPDDDSIIHLLHKGKPVSFELDKVFSPWASQQDVFQEVQALITSCIDGFNVCIFAYGQTGAGKTYTMEGTPENPGINQRALQLLFSEVQEKASDWQYNITVSAAEIYNEVLRDLLGKEPQEKLEIRLCPDGSGQLYVPGLTEFQVQSVDDINKVFEFGYNNRTTEFTNLNEHSSRSHALLIVTVRGVDCSTGLRTTGKLNLVDLAGSERVGKSGAEGNRLREAQHINRSLSALGDVIAALRSRQGHVPFRNSKLTYLLQDSLSGDSKTLMVVQVSPVEKNTSETLYSLRFAERVRSVELGPGSRRTELGSWSSQEHLEWEPACQTPQPTARAHSAPGSGTSSRPGSIRRKLQPSA.

Residues 27–79 are disordered; the sequence is EPKPGMARPAPASPAARPFPHTGQGRLRTGRGKDILPSGEEDSTSRTAARPSL. Over residues 33-46 the composition is skewed to low complexity; that stretch reads ARPAPASPAARPFP. Coiled-coil stretches lie at residues 100–360 and 393–430; these read LTVQ…ENLA and LLQE…LQLR. In terms of domain architecture, Kinesin motor spans 443 to 766; it reads NIRVIARVRP…LRFAERVRSV (324 aa). ATP is bound at residue 526–533; sequence GQTGAGKT. Positions 771-824 are disordered; that stretch reads GSRRTELGSWSSQEHLEWEPACQTPQPTARAHSAPGSGTSSRPGSIRRKLQPSA. A phosphoserine mark is found at S811 and S815. The span at 815–824 shows a compositional bias: basic residues; it reads SIRRKLQPSA.

It belongs to the TRAFAC class myosin-kinesin ATPase superfamily. Kinesin family. In terms of assembly, interacts with annexin XIIIB. As to expression, predominant expression in the kidney, testis and ovary. Also expressed in brain, heart, liver, lung and uterus.

Its subcellular location is the cytoplasm. The protein localises to the cytoskeleton. It is found in the cytoplasmic vesicle membrane. The protein resides in the cell junction. It localises to the adherens junction. Its subcellular location is the microtubule organizing center. The protein localises to the centrosome. Minus-end microtubule-dependent motor protein. Involved in apically targeted transport. Required for zonula adherens maintenance. The sequence is that of Kinesin-like protein KIFC3 (Kifc3) from Mus musculus (Mouse).